A 1527-amino-acid polypeptide reads, in one-letter code: DNA (cytosine-5)-methyltransferase 1A (1527 aa).

2 disordered regions span residues 1-62 (MAKS…PKRA) and 661-718 (GDTK…KEIK). Acidic residues-rich tracts occupy residues 25–36 (EPVENENLESEF) and 664–692 (KEED…EVNV). A compositionally biased stretch (basic and acidic residues) spans 709–718 (SSADTRKEIK). 2 BAH domains span residues 742 to 874 (LSIS…FSLP) and 910 to 1049 (ITYN…KQLP). The region spanning 1092–1526 (LATLDIFAGC…RKLKQAIDAK (435 aa)) is the SAM-dependent MTase C5-type domain. The active site involves Cys-1197.

The protein belongs to the class I-like SAM-binding methyltransferase superfamily. C5-methyltransferase family. As to expression, expressed in roots and inflorescences. Expressed in roots, panicles, anthers, pistils, endosperm and imbibed embryos. Expressed in tissues containing actively replicating and dividing cells, such as shoot and root meristems.

The protein localises to the nucleus. It catalyses the reaction a 2'-deoxycytidine in DNA + S-adenosyl-L-methionine = a 5-methyl-2'-deoxycytidine in DNA + S-adenosyl-L-homocysteine + H(+). Its function is as follows. Probably methylates CpG residues and maintains DNA methylation. May be involved in methylation-dependent gene silencing. May play a minor role in the maintenance of DNA methylation. The chain is DNA (cytosine-5)-methyltransferase 1A from Oryza sativa subsp. japonica (Rice).